The primary structure comprises 490 residues: N-succinylglutamate 5-semialdehyde dehydrogenase (490 aa).

224–229 is a binding site for NAD(+); the sequence is GSSPTG. Active-site residues include Glu-247 and Cys-281.

The protein belongs to the aldehyde dehydrogenase family. AstD subfamily.

The catalysed reaction is N-succinyl-L-glutamate 5-semialdehyde + NAD(+) + H2O = N-succinyl-L-glutamate + NADH + 2 H(+). It participates in amino-acid degradation; L-arginine degradation via AST pathway; L-glutamate and succinate from L-arginine: step 4/5. Its function is as follows. Catalyzes the NAD-dependent reduction of succinylglutamate semialdehyde into succinylglutamate. The protein is N-succinylglutamate 5-semialdehyde dehydrogenase of Hahella chejuensis (strain KCTC 2396).